Here is a 218-residue protein sequence, read N- to C-terminus: GTP cyclohydrolase 1 (218 aa).

The Zn(2+) site is built by cysteine 109, histidine 112, and cysteine 180.

Belongs to the GTP cyclohydrolase I family. In terms of assembly, toroid-shaped homodecamer, composed of two pentamers of five dimers.

The enzyme catalyses GTP + H2O = 7,8-dihydroneopterin 3'-triphosphate + formate + H(+). It functions in the pathway cofactor biosynthesis; 7,8-dihydroneopterin triphosphate biosynthesis; 7,8-dihydroneopterin triphosphate from GTP: step 1/1. This chain is GTP cyclohydrolase 1 (folE), found in Haemophilus influenzae (strain ATCC 51907 / DSM 11121 / KW20 / Rd).